The following is a 107-amino-acid chain: DNA polymerase delta subunit 4 (107 aa).

Positions 1 to 16 (MGRKRLITDSYPVVKR) match the PCNA-interaction protein motif (PIP box) motif. Residues 1 to 44 (MGRKRLITDSYPVVKRREGPAGHSKGELAPELGEEPQPRDEEEA) form a disordered region. Positions 15 to 28 (KRREGPAGHSKGEL) are enriched in basic and acidic residues.

The protein belongs to the DNA polymerase delta subunit 4 family. Component of the tetrameric DNA polymerase delta complex (Pol-delta4), which consists of POLD1/p125, POLD2/p50, POLD3/p66/p68 and POLD4/p12, with POLD1 bearing DNA polymerase and 3' to 5' proofreading exonuclease activities. Within this complex, directly interacts with POLD1 and POLD2. Directly interacts with PCNA, as do POLD1 and POLD3; this interaction stimulates Pol-delta4 polymerase activity. As POLD1 and POLD2, directly interacts with WRNIP1; this interaction stimulates DNA polymerase delta-mediated DNA synthesis, independently of the presence of PCNA. This stimulation may be due predominantly to an increase of initiation frequency and also to increased processivity. Upon genotoxic stress induced by DNA damaging agents or by replication stress, POLD4 is proteolytically degraded and Pol-delta4 is converted into a trimeric form of the complex (Pol-delta3) which has an increased proofreading activity. The DNA polymerase delta complex interacts with POLDIP2; this interaction is probably mediated through direct binding to POLD2. In terms of processing, ubiquitinated; undergoes 'Lys-48'-linked ubiquitination in response to UV irradiation, leading to proteasomal degradation. This modification is partly mediated by RNF8 and by the DCX(DTL) E3 ubiquitin ligase complex (also called CRL4(CDT2)). Efficient degradation requires the presence of PCNA and is required for the inhibition of fork progression after DNA damage.

It localises to the nucleus. As a component of the tetrameric DNA polymerase delta complex (Pol-delta4), plays a role in high fidelity genome replication and repair. Within this complex, increases the rate of DNA synthesis and decreases fidelity by regulating POLD1 polymerase and proofreading 3' to 5' exonuclease activity. Pol-delta4 participates in Okazaki fragment processing, through both the short flap pathway, as well as a nick translation system. Under conditions of DNA replication stress, required for the repair of broken replication forks through break-induced replication (BIR), a mechanism that may induce segmental genomic duplications of up to 200 kb. Involved in Pol-delta4 translesion synthesis (TLS) of templates carrying O6-methylguanine or abasic sites. Its degradation in response to DNA damage is required for the inhibition of fork progression and cell survival. This is DNA polymerase delta subunit 4 (POLD4) from Homo sapiens (Human).